A 302-amino-acid polypeptide reads, in one-letter code: HTH-type transcriptional regulator AlsR (302 aa).

The HTH lysR-type domain occupies 1–58; it reads MELRHLQYFIAVAEELHFGKAARRLNMTQPPLSQQIKQLEEEVGVTLLKRTKRFVELT. The segment at residues 18–37 is a DNA-binding region (H-T-H motif); that stretch reads FGKAARRLNMTQPPLSQQIK.

Belongs to the LysR transcriptional regulatory family.

Its function is as follows. Regulates the expression of the alsSD operon for acetoin biosynthesis. This chain is HTH-type transcriptional regulator AlsR (alsR), found in Bacillus subtilis (strain 168).